Here is a 189-residue protein sequence, read N- to C-terminus: Crossover junction endodeoxyribonuclease RuvC (189 aa).

Catalysis depends on residues aspartate 8, glutamate 67, and aspartate 139. Mg(2+)-binding residues include aspartate 8, glutamate 67, and aspartate 139.

This sequence belongs to the RuvC family. Homodimer which binds Holliday junction (HJ) DNA. The HJ becomes 2-fold symmetrical on binding to RuvC with unstacked arms; it has a different conformation from HJ DNA in complex with RuvA. In the full resolvosome a probable DNA-RuvA(4)-RuvB(12)-RuvC(2) complex forms which resolves the HJ. Mg(2+) is required as a cofactor.

The protein resides in the cytoplasm. It catalyses the reaction Endonucleolytic cleavage at a junction such as a reciprocal single-stranded crossover between two homologous DNA duplexes (Holliday junction).. Its function is as follows. The RuvA-RuvB-RuvC complex processes Holliday junction (HJ) DNA during genetic recombination and DNA repair. Endonuclease that resolves HJ intermediates. Cleaves cruciform DNA by making single-stranded nicks across the HJ at symmetrical positions within the homologous arms, yielding a 5'-phosphate and a 3'-hydroxyl group; requires a central core of homology in the junction. The consensus cleavage sequence is 5'-(A/T)TT(C/G)-3'. Cleavage occurs on the 3'-side of the TT dinucleotide at the point of strand exchange. HJ branch migration catalyzed by RuvA-RuvB allows RuvC to scan DNA until it finds its consensus sequence, where it cleaves and resolves the cruciform DNA. In Histophilus somni (strain 129Pt) (Haemophilus somnus), this protein is Crossover junction endodeoxyribonuclease RuvC.